We begin with the raw amino-acid sequence, 285 residues long: Bifunctional protein FolD (285 aa).

NADP(+) is bound by residues 165–167 (GRS), Ser-190, and Ile-231.

Belongs to the tetrahydrofolate dehydrogenase/cyclohydrolase family. Homodimer.

It carries out the reaction (6R)-5,10-methylene-5,6,7,8-tetrahydrofolate + NADP(+) = (6R)-5,10-methenyltetrahydrofolate + NADPH. The catalysed reaction is (6R)-5,10-methenyltetrahydrofolate + H2O = (6R)-10-formyltetrahydrofolate + H(+). The protein operates within one-carbon metabolism; tetrahydrofolate interconversion. Its function is as follows. Catalyzes the oxidation of 5,10-methylenetetrahydrofolate to 5,10-methenyltetrahydrofolate and then the hydrolysis of 5,10-methenyltetrahydrofolate to 10-formyltetrahydrofolate. The chain is Bifunctional protein FolD from Acetivibrio thermocellus (strain ATCC 27405 / DSM 1237 / JCM 9322 / NBRC 103400 / NCIMB 10682 / NRRL B-4536 / VPI 7372) (Clostridium thermocellum).